A 158-amino-acid polypeptide reads, in one-letter code: Snaclec alboaggregin-D subunit alpha (158 aa).

Positions 1–23 are cleaved as a signal peptide; that stretch reads MGRFIFGSFGLLVVFLSLSGTGA. 3 disulfides stabilise this stretch: Cys27-Cys38, Cys55-Cys152, and Cys127-Cys144. The C-type lectin domain maps to 34 to 153; it reads YDRYCYQAFS…CAELNPFICK (120 aa).

Belongs to the snaclec family. In terms of assembly, tetramer of heterodimers of alpha and beta subunits (alphabeta)(4); disulfide-linked. In terms of tissue distribution, expressed by the venom gland.

It is found in the secreted. Functionally, snaclec that induces human platelet aggregation in the absence of any cofactor with the EC(50) of 0.25 nM and causes tyrosine phosphorylation in human platelets. Antibodies against either platelet GPIbalpha (GP1BA) or GPVI (GP6) inhibit alboaggregin D-induced platelet aggregation. Only the combination of these two antibodies completely inhibit aggregation, suggesting that it acts through both GPIbalpha (GP1BA) and GPVI (GP6). This chain is Snaclec alboaggregin-D subunit alpha, found in Trimeresurus albolabris (White-lipped pit viper).